The sequence spans 275 residues: Shikimate dehydrogenase (NADP(+)) (275 aa).

Shikimate is bound by residues S19–S21 and T66. K70 acts as the Proton acceptor in catalysis. N91 and D106 together coordinate shikimate. NADP(+)-binding positions include G129–A133, N153–R158, and I219. Residue Y221 participates in shikimate binding. Residue G242 participates in NADP(+) binding.

The protein belongs to the shikimate dehydrogenase family. In terms of assembly, homodimer.

It catalyses the reaction shikimate + NADP(+) = 3-dehydroshikimate + NADPH + H(+). Its pathway is metabolic intermediate biosynthesis; chorismate biosynthesis; chorismate from D-erythrose 4-phosphate and phosphoenolpyruvate: step 4/7. Functionally, involved in the biosynthesis of the chorismate, which leads to the biosynthesis of aromatic amino acids. Catalyzes the reversible NADPH linked reduction of 3-dehydroshikimate (DHSA) to yield shikimate (SA). The polypeptide is Shikimate dehydrogenase (NADP(+)) (Dictyoglomus thermophilum (strain ATCC 35947 / DSM 3960 / H-6-12)).